The primary structure comprises 430 residues: Enolase (430 aa).

Glutamine 163 provides a ligand contact to (2R)-2-phosphoglycerate. Residue glutamate 205 is the Proton donor of the active site. Positions 242, 287, and 314 each coordinate Mg(2+). (2R)-2-phosphoglycerate is bound by residues lysine 339, arginine 368, serine 369, and lysine 390. The Proton acceptor role is filled by lysine 339.

Belongs to the enolase family. The cofactor is Mg(2+).

It is found in the cytoplasm. It localises to the secreted. The protein resides in the cell surface. It carries out the reaction (2R)-2-phosphoglycerate = phosphoenolpyruvate + H2O. It participates in carbohydrate degradation; glycolysis; pyruvate from D-glyceraldehyde 3-phosphate: step 4/5. Functionally, catalyzes the reversible conversion of 2-phosphoglycerate (2-PG) into phosphoenolpyruvate (PEP). It is essential for the degradation of carbohydrates via glycolysis. This chain is Enolase, found in Exiguobacterium sibiricum (strain DSM 17290 / CCUG 55495 / CIP 109462 / JCM 13490 / 255-15).